The sequence spans 299 residues: Phosphoribosylaminoimidazole-succinocarboxamide synthase (299 aa).

It belongs to the SAICAR synthetase family.

The catalysed reaction is 5-amino-1-(5-phospho-D-ribosyl)imidazole-4-carboxylate + L-aspartate + ATP = (2S)-2-[5-amino-1-(5-phospho-beta-D-ribosyl)imidazole-4-carboxamido]succinate + ADP + phosphate + 2 H(+). It participates in purine metabolism; IMP biosynthesis via de novo pathway; 5-amino-1-(5-phospho-D-ribosyl)imidazole-4-carboxamide from 5-amino-1-(5-phospho-D-ribosyl)imidazole-4-carboxylate: step 1/2. The polypeptide is Phosphoribosylaminoimidazole-succinocarboxamide synthase (Streptomyces coelicolor (strain ATCC BAA-471 / A3(2) / M145)).